The chain runs to 374 residues: Pectate lyase 3 (374 aa).

The signal sequence occupies residues 1–22 (MKYLLPSAAAGLLLLAAQPTMA). Cys93 and Cys176 are oxidised to a cystine. Ca(2+)-binding residues include Asp150, Asp152, Glu187, and Asp191. Residue Arg239 is part of the active site. Cysteines 350 and 373 form a disulfide.

The protein belongs to the polysaccharide lyase 1 family. PLADES subfamily. Ca(2+) serves as cofactor.

Its subcellular location is the secreted. The enzyme catalyses Eliminative cleavage of (1-&gt;4)-alpha-D-galacturonan to give oligosaccharides with 4-deoxy-alpha-D-galact-4-enuronosyl groups at their non-reducing ends.. It functions in the pathway glycan metabolism; pectin degradation; 2-dehydro-3-deoxy-D-gluconate from pectin: step 2/5. Its function is as follows. Involved in maceration and soft-rotting of plant tissue. This is Pectate lyase 3 (pel3) from Pectobacterium carotovorum subsp. carotovorum (Erwinia carotovora subsp. carotovora).